A 1180-amino-acid polypeptide reads, in one-letter code: Phosphatidylinositol 4-kinase (1180 aa).

Residues 1–206 enclose the PIK helical domain; the sequence is MNKISDTIII…SVYLHSPSTS (206 aa). 5 disordered regions span residues 15–84, 257–327, 355–391, 768–799, and 832–894; these read NEDE…KHKE, ENDH…ENDN, TSPI…NNIN, TISN…IPHS, and AISP…SPFG. Positions 38–74 are enriched in low complexity; it reads NNNNNNILTNVNNNKNNTITSSGGSDSSSSSSNNNNN. The span at 75 to 84 shows a compositional bias: basic residues; sequence KIKKSKKHKE. Residues 257-270 show a composition bias toward basic and acidic residues; that stretch reads ENDHHIENDPKKDI. Composition is skewed to low complexity over residues 271–325, 364–391, 768–793, and 835–879; these read NSNN…SGEN, NNNN…NNIN, TISN…PTLP, and PPSQ…SPTN. In terms of domain architecture, PI3K/PI4K catalytic spans 895 to 1164; the sequence is ESWQEKIERY…LISYSIDHFK (270 aa). The interval 901–907 is G-loop; it reads IERYKKI. The interval 1030–1038 is catalytic loop; the sequence is QIKDRHNGN. The tract at residues 1049 to 1073 is activation loop; the sequence is HIDFGFILSNSPGNISFESAPFKLT.

The protein belongs to the PI3/PI4-kinase family. Type III PI4K subfamily.

The enzyme catalyses a 1,2-diacyl-sn-glycero-3-phospho-(1D-myo-inositol) + ATP = a 1,2-diacyl-sn-glycero-3-phospho-(1D-myo-inositol 4-phosphate) + ADP + H(+). Acts on phosphatidylinositol (PtdIns) in the first committed step in the production of the second messenger inositol-1,4,5,-trisphosphate. In Dictyostelium discoideum (Social amoeba), this protein is Phosphatidylinositol 4-kinase (pikD).